A 457-amino-acid polypeptide reads, in one-letter code: Argininosuccinate lyase (457 aa).

Belongs to the lyase 1 family. Argininosuccinate lyase subfamily.

The protein resides in the cytoplasm. It carries out the reaction 2-(N(omega)-L-arginino)succinate = fumarate + L-arginine. Its pathway is amino-acid biosynthesis; L-arginine biosynthesis; L-arginine from L-ornithine and carbamoyl phosphate: step 3/3. In Haemophilus influenzae (strain 86-028NP), this protein is Argininosuccinate lyase.